Here is a 178-residue protein sequence, read N- to C-terminus: Large ribosomal subunit protein uL5 (178 aa).

It belongs to the universal ribosomal protein uL5 family. Part of the 50S ribosomal subunit; part of the 5S rRNA/L5/L18/L25 subcomplex. Contacts the 5S rRNA and the P site tRNA. Forms a bridge to the 30S subunit in the 70S ribosome.

This is one of the proteins that bind and probably mediate the attachment of the 5S RNA into the large ribosomal subunit, where it forms part of the central protuberance. In the 70S ribosome it contacts protein S13 of the 30S subunit (bridge B1b), connecting the 2 subunits; this bridge is implicated in subunit movement. Contacts the P site tRNA; the 5S rRNA and some of its associated proteins might help stabilize positioning of ribosome-bound tRNAs. This Syntrophomonas wolfei subsp. wolfei (strain DSM 2245B / Goettingen) protein is Large ribosomal subunit protein uL5.